A 418-amino-acid polypeptide reads, in one-letter code: 3-isopropylmalate dehydratase large subunit 1 (418 aa).

Residues Cys298, Cys358, and Cys361 each contribute to the [4Fe-4S] cluster site.

It belongs to the aconitase/IPM isomerase family. LeuC type 2 subfamily. Heterodimer of LeuC and LeuD. Requires [4Fe-4S] cluster as cofactor.

It catalyses the reaction (2R,3S)-3-isopropylmalate = (2S)-2-isopropylmalate. The protein operates within amino-acid biosynthesis; L-leucine biosynthesis; L-leucine from 3-methyl-2-oxobutanoate: step 2/4. Functionally, catalyzes the isomerization between 2-isopropylmalate and 3-isopropylmalate, via the formation of 2-isopropylmaleate. This is 3-isopropylmalate dehydratase large subunit 1 from Methanopyrus kandleri (strain AV19 / DSM 6324 / JCM 9639 / NBRC 100938).